The primary structure comprises 339 residues: Ketol-acid reductoisomerase (NADP(+)) (339 aa).

The KARI N-terminal Rossmann domain maps to 1–182; the sequence is MRVYYDRDAD…GGGRSGIIET (182 aa). NADP(+) is bound by residues 24–27, Lys-48, Ser-51, Thr-53, and 83–86; these read YGSQ and DELQ. Residue His-108 is part of the active site. Gly-134 contributes to the NADP(+) binding site. The 146-residue stretch at 183–328 folds into the KARI C-terminal knotted domain; it reads NFREECETDL…AKLRGMMPWI (146 aa). Residues Asp-191, Glu-195, Glu-227, and Glu-231 each coordinate Mg(2+). Position 252 (Ser-252) interacts with substrate.

The protein belongs to the ketol-acid reductoisomerase family. Mg(2+) is required as a cofactor.

It catalyses the reaction (2R)-2,3-dihydroxy-3-methylbutanoate + NADP(+) = (2S)-2-acetolactate + NADPH + H(+). The catalysed reaction is (2R,3R)-2,3-dihydroxy-3-methylpentanoate + NADP(+) = (S)-2-ethyl-2-hydroxy-3-oxobutanoate + NADPH + H(+). Its pathway is amino-acid biosynthesis; L-isoleucine biosynthesis; L-isoleucine from 2-oxobutanoate: step 2/4. It functions in the pathway amino-acid biosynthesis; L-valine biosynthesis; L-valine from pyruvate: step 2/4. In terms of biological role, involved in the biosynthesis of branched-chain amino acids (BCAA). Catalyzes an alkyl-migration followed by a ketol-acid reduction of (S)-2-acetolactate (S2AL) to yield (R)-2,3-dihydroxy-isovalerate. In the isomerase reaction, S2AL is rearranged via a Mg-dependent methyl migration to produce 3-hydroxy-3-methyl-2-ketobutyrate (HMKB). In the reductase reaction, this 2-ketoacid undergoes a metal-dependent reduction by NADPH to yield (R)-2,3-dihydroxy-isovalerate. The sequence is that of Ketol-acid reductoisomerase (NADP(+)) from Rhizobium johnstonii (strain DSM 114642 / LMG 32736 / 3841) (Rhizobium leguminosarum bv. viciae).